The following is a 283-amino-acid chain: Phosphatidylserine decarboxylase proenzyme (283 aa).

Catalysis depends on charge relay system; for autoendoproteolytic cleavage activity residues aspartate 90, histidine 143, and serine 248. Residue serine 248 is the Schiff-base intermediate with substrate; via pyruvic acid; for decarboxylase activity of the active site. At serine 248 the chain carries Pyruvic acid (Ser); by autocatalysis.

It belongs to the phosphatidylserine decarboxylase family. PSD-B subfamily. Prokaryotic type I sub-subfamily. Heterodimer of a large membrane-associated beta subunit and a small pyruvoyl-containing alpha subunit. It depends on pyruvate as a cofactor. In terms of processing, is synthesized initially as an inactive proenzyme. Formation of the active enzyme involves a self-maturation process in which the active site pyruvoyl group is generated from an internal serine residue via an autocatalytic post-translational modification. Two non-identical subunits are generated from the proenzyme in this reaction, and the pyruvate is formed at the N-terminus of the alpha chain, which is derived from the carboxyl end of the proenzyme. The autoendoproteolytic cleavage occurs by a canonical serine protease mechanism, in which the side chain hydroxyl group of the serine supplies its oxygen atom to form the C-terminus of the beta chain, while the remainder of the serine residue undergoes an oxidative deamination to produce ammonia and the pyruvoyl prosthetic group on the alpha chain. During this reaction, the Ser that is part of the protease active site of the proenzyme becomes the pyruvoyl prosthetic group, which constitutes an essential element of the active site of the mature decarboxylase.

Its subcellular location is the cell membrane. The catalysed reaction is a 1,2-diacyl-sn-glycero-3-phospho-L-serine + H(+) = a 1,2-diacyl-sn-glycero-3-phosphoethanolamine + CO2. It participates in phospholipid metabolism; phosphatidylethanolamine biosynthesis; phosphatidylethanolamine from CDP-diacylglycerol: step 2/2. Catalyzes the formation of phosphatidylethanolamine (PtdEtn) from phosphatidylserine (PtdSer). The polypeptide is Phosphatidylserine decarboxylase proenzyme (Francisella tularensis subsp. mediasiatica (strain FSC147)).